The following is a 555-amino-acid chain: Efflux pump FUS6 (555 aa).

Positions 1-23 (MASAKDAQPAPEKSLSSDPQPEP) are disordered. 5 helical membrane-spanning segments follow: residues 31 to 51 (WLIF…TSII), 67 to 87 (LYVW…PIFA), 97 to 117 (SLTL…GGAH), 130 to 150 (GIGG…MVSI), and 159 to 179 (IIGG…GAFA). The N-linked (GlcNAc...) asparagine glycan is linked to Asn-181. Transmembrane regions (helical) follow at residues 186–206 (WIFY…GLFL), 225–245 (WGGS…LSWG), and 253–273 (GWQT…FFAY). An N-linked (GlcNAc...) asparagine glycan is attached at Asn-291. 6 helical membrane-spanning segments follow: residues 297 to 317 (LLVI…FLPV), 332 to 352 (VMLF…GITI), 360 to 380 (VWHF…TLLD), 393 to 413 (ILFG…ILAS), 425 to 445 (AWTF…AAVF), and 501 to 521 (KVVW…CFFV). N-linked (GlcNAc...) asparagine glycosylation occurs at Asn-545.

It belongs to the major facilitator superfamily. TCR/Tet family.

The protein resides in the membrane. Its function is as follows. Efflux pump; part of the gene cluster that mediates the biosynthesis of the mycotoxin fusarin C. Within the cluster, FUS1, FUS2, FUS8 and FUS9 are sufficient for fusarin production. The other FUS cluster members are not essential for fusarin C biosynthesis. The protein is Efflux pump FUS6 of Gibberella fujikuroi (strain CBS 195.34 / IMI 58289 / NRRL A-6831) (Bakanae and foot rot disease fungus).